Reading from the N-terminus, the 597-residue chain is MAAACPLPRTPDLPTLHDKLQGLLSFLRGALAISSAHTVDFYTKSVWQELVDLPPESVLAALRESAVEAEPREAETGSGFTELPKIFCETSQKLLSVEAFARTAKHYSVQNLGLCTPSEQLLTALQGNKRQRVDENVKAIEFMNTKKSHEVQAMSELICSIADYCGLKQIIDVGSGKGYLSSFLSLKYGLNVYGIDSSNTNTHGAKERNRKLKKHWSLYHPHSRADANGWASERPRELKVPKGVECKGDAESVQRSRLGNPDLSATDGLPDFSGSAISVIRKQQKNVLAQPAEEENLYFEDAFSLIDFLPVDAIEPTSSQVQNTEKSGLRKERRNTASKARDSSIYSPLTSFITADSQLHDIIEDLEDCLMVGLHTCGDLAPSTLRIFTSKAEVKAVCSVGCCYHLLSEEFENQHKDRCANENWGFPMCHYLKEERWCCGRNARMSACLALQRVAVGQGLPTESLFYRAVLQNIIKDYYGISKCEQHVGKIYSKCSSFLEYVRMSLKKLGLDESKVSEEIIMDYYENYKPRMNELEAFNMLKVVLAPCIETLILLDRLCYLKEQDGVAWSALVKLFDPVQSPRCYAVIALKKQCDLG.

A compositionally biased stretch (basic and acidic residues) spans 245–254; the sequence is ECKGDAESVQ. Disordered stretches follow at residues 245–265 and 317–342; these read ECKGDAESVQRSRLGNPDLSA and TSSQVQNTEKSGLRKERRNTASKARD. Over residues 317–326 the composition is skewed to polar residues; that stretch reads TSSQVQNTEK.

In terms of biological role, probable methyltransferase. This is Probable methyltransferase-like protein 25 (Mettl25) from Mus musculus (Mouse).